The following is a 176-amino-acid chain: ATP synthase subunit b 2 (176 aa).

Residues 29–49 traverse the membrane as a helical segment; sequence IFWLVITLVIIYMVLSKVALP.

Belongs to the ATPase B chain family. F-type ATPases have 2 components, F(1) - the catalytic core - and F(0) - the membrane proton channel. F(1) has five subunits: alpha(3), beta(3), gamma(1), delta(1), epsilon(1). F(0) has three main subunits: a(1), b(2) and c(10-14). The alpha and beta chains form an alternating ring which encloses part of the gamma chain. F(1) is attached to F(0) by a central stalk formed by the gamma and epsilon chains, while a peripheral stalk is formed by the delta and b chains.

It is found in the cell inner membrane. Its function is as follows. F(1)F(0) ATP synthase produces ATP from ADP in the presence of a proton or sodium gradient. F-type ATPases consist of two structural domains, F(1) containing the extramembraneous catalytic core and F(0) containing the membrane proton channel, linked together by a central stalk and a peripheral stalk. During catalysis, ATP synthesis in the catalytic domain of F(1) is coupled via a rotary mechanism of the central stalk subunits to proton translocation. In terms of biological role, component of the F(0) channel, it forms part of the peripheral stalk, linking F(1) to F(0). The b'-subunit is a diverged and duplicated form of b found in plants and photosynthetic bacteria. This chain is ATP synthase subunit b 2 (atpF2), found in Roseobacter denitrificans (strain ATCC 33942 / OCh 114) (Erythrobacter sp. (strain OCh 114)).